The sequence spans 100 residues: Large ribosomal subunit protein uL23 (100 aa).

This sequence belongs to the universal ribosomal protein uL23 family. Part of the 50S ribosomal subunit. Contacts protein L29, and trigger factor when it is bound to the ribosome.

In terms of biological role, one of the early assembly proteins it binds 23S rRNA. One of the proteins that surrounds the polypeptide exit tunnel on the outside of the ribosome. Forms the main docking site for trigger factor binding to the ribosome. This is Large ribosomal subunit protein uL23 from Vibrio cholerae serotype O1 (strain ATCC 39541 / Classical Ogawa 395 / O395).